The sequence spans 152 residues: MLSIVLAIVAVVVDQVTKWLVATRMALHSEIEIIPGFFSLQYVHNTGAAFGMLRNGRWFFVAVAALAVAGILYYLRQPESRHPLLRVALGLVMGGAVGNMIDRIATGRVVDFLLFYWRDYYFPNFNVADICVTVGVGLLFLHLVLVERKGTA.

Transmembrane regions (helical) follow at residues 55-75 and 87-107; these read NGRWFFVAVAALAVAGILYYL and VALGLVMGGAVGNMIDRIATG. Active-site residues include aspartate 111 and aspartate 129. A helical transmembrane segment spans residues 125 to 145; that stretch reads FNVADICVTVGVGLLFLHLVL.

The protein belongs to the peptidase A8 family.

It localises to the cell membrane. It catalyses the reaction Release of signal peptides from bacterial membrane prolipoproteins. Hydrolyzes -Xaa-Yaa-Zaa-|-(S,diacylglyceryl)Cys-, in which Xaa is hydrophobic (preferably Leu), and Yaa (Ala or Ser) and Zaa (Gly or Ala) have small, neutral side chains.. It functions in the pathway protein modification; lipoprotein biosynthesis (signal peptide cleavage). In terms of biological role, this protein specifically catalyzes the removal of signal peptides from prolipoproteins. In Symbiobacterium thermophilum (strain DSM 24528 / JCM 14929 / IAM 14863 / T), this protein is Lipoprotein signal peptidase.